Here is a 130-residue protein sequence, read N- to C-terminus: Small ribosomal subunit protein uS9 (130 aa).

Belongs to the universal ribosomal protein uS9 family.

The polypeptide is Small ribosomal subunit protein uS9 (Edwardsiella ictaluri (strain 93-146)).